The following is a 670-amino-acid chain: FAD-binding monooxygenase ausC (670 aa).

FAD is bound by residues T144–W147, D156–T157, and Y162. M154 to D156 serves as a coordination point for NADP(+). NADP(+) contacts are provided by residues T299–Q305 and R322–T323.

The protein belongs to the FAD-binding monooxygenase family. It depends on FAD as a cofactor.

The catalysed reaction is preaustinoid A + AH2 + O2 = preaustinoid A1 + A + H2O. It participates in secondary metabolite biosynthesis; terpenoid biosynthesis. FAD-binding monooxygenase; part of the gene cluster that mediates the biosynthesis of calidodehydroaustin, a fungal meroterpenoid. The first step of the pathway is the synthesis of 3,5-dimethylorsellinic acid by the polyketide synthase ausA. 3,5-dimethylorsellinic acid is then prenylated by the polyprenyl transferase ausN. Further epoxidation by the FAD-dependent monooxygenase ausM and cyclization by the probable terpene cyclase ausL lead to the formation of protoaustinoid A. Protoaustinoid A is then oxidized to spiro-lactone preaustinoid A3 by the combined action of the FAD-binding monooxygenases ausB and ausC, and the dioxygenase ausE. Acid-catalyzed keto-rearrangement and ring contraction of the tetraketide portion of preaustinoid A3 by ausJ lead to the formation of preaustinoid A4. The aldo-keto reductase ausK, with the help of ausH, is involved in the next step by transforming preaustinoid A4 into isoaustinone which is in turn hydroxylated by the P450 monooxygenase ausI to form austinolide. The cytochrome P450 monooxygenase ausG modifies austinolide to austinol. Austinol is further acetylated to austin by the O-acetyltransferase ausP, which spontaneously changes to dehydroaustin. The cytochrome P450 monooxygenase ausR then converts dehydroaustin is into 7-dehydrodehydroaustin. The hydroxylation catalyzed by ausR permits the O-acetyltransferase ausQ to add an additional acetyl group to the molecule, leading to the formation of acetoxydehydroaustin. The short chain dehydrogenase ausT catalyzes the reduction of the double bond present between carbon atoms 1 and 2 to convert 7-dehydrodehydroaustin into 1,2-dihydro-7-hydroxydehydroaustin. AusQ catalyzes not only an acetylation reaction but also the addition of the PKS ausV diketide product to 1,2-dihydro-7-hydroxydehydroaustin, forming precalidodehydroaustin. Finally, the iron/alpha-ketoglutarate-dependent dioxygenase converts precalidodehydroaustin into calidodehydroaustin. This chain is FAD-binding monooxygenase ausC, found in Aspergillus calidoustus.